A 757-amino-acid polypeptide reads, in one-letter code: Zinc finger CCCH domain-containing protein 5 (757 aa).

The interval 1–127 (MEQANEKEEE…REEEERRWKD (127 aa)) is disordered. The span at 13–35 (HEEAAGEKESFEESKEKAAEMSR) shows a compositional bias: basic and acidic residues. Residues 36–50 (KEKRKAMKKLKRKQV) show a composition bias toward basic residues. Over residues 51-127 (RKEIAAKERE…REEEERRWKD (77 aa)) the composition is skewed to basic and acidic residues. The C3H1-type 1 zinc finger occupies 240–268 (EQDKAHCPFHLKTGACRFGQRCSRVHFYP). One can recognise an RRM domain in the interval 295–372 (YTDEEAELCY…KQVNCEFVNI (78 aa)). Residues 374–404 (RWKVAICGEYMKSRLKTCSRGSACNFIHCFR) form a C3H1-type 2 zinc finger. The segment at 441 to 757 (HESSGSLNDS…EEEIERWRPV (317 aa)) is disordered. The span at 444-455 (SGSLNDSISDLS) shows a compositional bias: polar residues. Residues 487–546 (YHGDTQDSTREDKLRRHAENCHDGDDSPSRDGSLEREMYKERRYAKDTLHRDSRWSEHSP) are compositionally biased toward basic and acidic residues. 2 stretches are compositionally biased toward basic residues: residues 547-557 (GHRVGRKRIHG) and 600-609 (KTHRSSRKHS). 3 stretches are compositionally biased toward basic and acidic residues: residues 610–634 (REGS…DKSH), 644–672 (RSSS…KRSV), and 681–721 (SDKD…ETHK). The segment covering 722 to 733 (ERRHRHRKRRRT) has biased composition (basic residues).

In Arabidopsis thaliana (Mouse-ear cress), this protein is Zinc finger CCCH domain-containing protein 5.